Reading from the N-terminus, the 366-residue chain is tRNA/tmRNA (uracil-C(5))-methyltransferase (366 aa).

The S-adenosyl-L-methionine site is built by Q189, Y217, N222, E238, and D298. C323 serves as the catalytic Nucleophile. E357 serves as the catalytic Proton acceptor.

The protein belongs to the class I-like SAM-binding methyltransferase superfamily. RNA M5U methyltransferase family. TrmA subfamily.

The catalysed reaction is uridine(54) in tRNA + S-adenosyl-L-methionine = 5-methyluridine(54) in tRNA + S-adenosyl-L-homocysteine + H(+). The enzyme catalyses uridine(341) in tmRNA + S-adenosyl-L-methionine = 5-methyluridine(341) in tmRNA + S-adenosyl-L-homocysteine + H(+). Its function is as follows. Dual-specificity methyltransferase that catalyzes the formation of 5-methyluridine at position 54 (m5U54) in all tRNAs, and that of position 341 (m5U341) in tmRNA (transfer-mRNA). The chain is tRNA/tmRNA (uracil-C(5))-methyltransferase from Shewanella putrefaciens (strain CN-32 / ATCC BAA-453).